Consider the following 693-residue polypeptide: Protein FAM13A (693 aa).

S19 bears the Phosphoserine mark. 2 disordered regions span residues 56-89 and 136-233; these read SNAGDQSSEDSEPGPSSASSIPTRQRGHQFKKQD and RSKP…VPDM. Over residues 69–78 the composition is skewed to polar residues; sequence GPSSASSIPT. Low complexity predominate over residues 159–171; the sequence is LSMESLSSMQSQE. The span at 184-197 shows a compositional bias: basic and acidic residues; that stretch reads ESKEIERGGRDTQH. Residues S267 and S287 each carry the phosphoserine modification. 2 disordered regions span residues 302-331 and 396-424; these read DTEVPPSPPNSHSFMRRRSSSLGSYDDEQE and ISEEDLTPRTRQRSNTLPKSFGSQLEKED. S397 bears the Phosphoserine mark. Position 402 is a phosphothreonine (T402). Polar residues predominate over residues 408–418; sequence RSNTLPKSFGS.

Belongs to the FAM13 family. In terms of assembly, interacts with ANXA2. Expressed in the mammary gland, with similar levels at all stages of development, including pregnancy, lactation and involution.

Its function is as follows. (Microbial infection) Plays a role in the clearance of Pseudomonas aeruginosa by macrophages. In complex with ANXA2, promotes activation of Rho GTPases following P.aeruginosa infection. The protein is Protein FAM13A (Fam13a) of Mus musculus (Mouse).